The sequence spans 459 residues: F-box protein At1g47340 (459 aa).

The 46-residue stretch at 31–76 (FMVSVSLPKELILEILKRLPAKSVKRFHCVSKQWASMLSCPHFREL) folds into the F-box domain. Positions 434–459 (AKIEWEEEEEEDEDEDQEKEEEDQWS) are disordered. The segment covering 438 to 459 (WEEEEEEDEDEDQEKEEEDQWS) has biased composition (acidic residues).

The polypeptide is F-box protein At1g47340 (Arabidopsis thaliana (Mouse-ear cress)).